The sequence spans 163 residues: 3-dehydroquinate dehydratase (163 aa).

The active-site Proton acceptor is the Y28. N80, H86, and D93 together coordinate substrate. The Proton donor role is filled by H106. Residues 107-108 (IS) and R117 contribute to the substrate site.

Belongs to the type-II 3-dehydroquinase family. In terms of assembly, homododecamer.

It carries out the reaction 3-dehydroquinate = 3-dehydroshikimate + H2O. It participates in metabolic intermediate biosynthesis; chorismate biosynthesis; chorismate from D-erythrose 4-phosphate and phosphoenolpyruvate: step 3/7. Its function is as follows. Catalyzes a trans-dehydration via an enolate intermediate. This Bradyrhizobium sp. (strain BTAi1 / ATCC BAA-1182) protein is 3-dehydroquinate dehydratase.